A 422-amino-acid chain; its full sequence is Carboxypeptidase B2 (422 aa).

A signal peptide spans 1-21 (MKLYGLGVLVAIILYEKHGLA). A propeptide spans 22–113 (FQSGHVLSAL…QTSNDTVSPR (92 aa)) (activation peptide). Residues N43, N72, N84, and N107 are each glycosylated (N-linked (GlcNAc...) asparagine). In terms of domain architecture, Peptidase M14 spans 121 to 418 (QYHSLNEIYS…AAVSKIAWHV (298 aa)). C177 and C190 are joined by a disulfide. Residues H180 and E183 each contribute to the Zn(2+) site. Substrate contacts are provided by residues 180–183 (HARE) and R238. Residue N240 is glycosylated (N-linked (GlcNAc...) asparagine). Disulfide bonds link C249/C273 and C264/C278. A substrate-binding site is contributed by 255–256 (NR). H309 provides a ligand contact to Zn(2+). 310–311 (SY) is a substrate binding site. N322 carries N-linked (GlcNAc...) asparagine glycosylation. Y362 contacts substrate. Residue E384 is the Proton donor/acceptor of the active site.

Belongs to the peptidase M14 family. The cofactor is Zn(2+). As to expression, plasma; synthesized in the liver.

It localises to the secreted. It catalyses the reaction Release of C-terminal Arg and Lys from a polypeptide.. TAFI/CPB2 is unique among carboxypeptidases in that it spontaneously inactivates with a short half-life, a property that is crucial for its role in controlling blood clot lysis. The zymogen is stabilized by interactions with the activation peptide. Release of the activation peptide increases a dynamic flap mobility and in time this leads to conformational changes that disrupt the catalytic site and expose a cryptic thrombin-cleavage site present at Arg-323. Functionally, cleaves C-terminal arginine or lysine residues from biologically active peptides such as kinins or anaphylatoxins in the circulation thereby regulating their activities. Down-regulates fibrinolysis by removing C-terminal lysine residues from fibrin that has already been partially degraded by plasmin. This is Carboxypeptidase B2 (Cpb2) from Rattus norvegicus (Rat).